Reading from the N-terminus, the 197-residue chain is FMN-dependent NADH:quinone oxidoreductase (197 aa).

FMN-binding positions include serine 10 and 17–19; that span reads SFS.

It belongs to the azoreductase type 1 family. As to quaternary structure, homodimer. Requires FMN as cofactor.

The enzyme catalyses 2 a quinone + NADH + H(+) = 2 a 1,4-benzosemiquinone + NAD(+). The catalysed reaction is N,N-dimethyl-1,4-phenylenediamine + anthranilate + 2 NAD(+) = 2-(4-dimethylaminophenyl)diazenylbenzoate + 2 NADH + 2 H(+). Functionally, quinone reductase that provides resistance to thiol-specific stress caused by electrophilic quinones. Its function is as follows. Also exhibits azoreductase activity. Catalyzes the reductive cleavage of the azo bond in aromatic azo compounds to the corresponding amines. This chain is FMN-dependent NADH:quinone oxidoreductase, found in Mycoplasmoides gallisepticum (strain R(low / passage 15 / clone 2)) (Mycoplasma gallisepticum).